The following is a 512-amino-acid chain: Sucrose-6-phosphate hydrolase (512 aa).

Substrate contacts are provided by residues tryptophan 40 to aspartate 43, glutamine 59, tryptophan 67, phenylalanine 102 to serine 103, arginine 165 to aspartate 166, glutamate 229, and tryptophan 311. Residue aspartate 43 is part of the active site.

It belongs to the glycosyl hydrolase 32 family.

The protein resides in the cytoplasm. It carries out the reaction Hydrolysis of terminal non-reducing beta-D-fructofuranoside residues in beta-D-fructofuranosides.. It participates in glycan biosynthesis; sucrose metabolism. This is Sucrose-6-phosphate hydrolase (sacA) from Zymomonas mobilis subsp. mobilis (strain ATCC 10988 / DSM 424 / LMG 404 / NCIMB 8938 / NRRL B-806 / ZM1).